A 105-amino-acid polypeptide reads, in one-letter code: ATP-dependent Clp protease adapter protein ClpS (105 aa).

It belongs to the ClpS family. In terms of assembly, binds to the N-terminal domain of the chaperone ClpA.

Functionally, involved in the modulation of the specificity of the ClpAP-mediated ATP-dependent protein degradation. The sequence is that of ATP-dependent Clp protease adapter protein ClpS from Aeromonas hydrophila subsp. hydrophila (strain ATCC 7966 / DSM 30187 / BCRC 13018 / CCUG 14551 / JCM 1027 / KCTC 2358 / NCIMB 9240 / NCTC 8049).